Here is a 51-residue protein sequence, read N- to C-terminus: MEKNNEVINSIQEVSLEELDQIIGAGKNGVFKTISHECHLNTWAFLATCCS.

Positions 1–25 (MEKNNEVINSIQEVSLEELDQIIGA) are excised as a propeptide. Cross-links (beta-methyllanthionine (Thr-Cys)) lie at residues 33–38 (TISHEC) and 42–50 (TWAFLATCC). Positions 35-49 (SHECHLNTWAFLATC) form a cross-link, lanthionine (Ser-Cys). Residue Thr-48 is modified to 2,3-didehydrobutyrine.

This sequence belongs to the type A lantibiotic family. Post-translationally, maturation of lantibiotics involves the enzymatic conversion of Thr, and Ser into dehydrated AA and the formation of thioether bonds with cysteine. This is followed by membrane translocation and cleavage of the modified precursor.

The protein localises to the secreted. The protein resides in the cell surface. Lanthionine-containing peptide antibiotic (lantibiotic) active on certain Gram-positive bacteria. The bactericidal activity of lantibiotics is based on depolarization of energized bacterial cytoplasmic membranes, initiated by the formation of aqueous transmembrane pores. This Streptococcus pyogenes protein is Lantibiotic streptococcin A-FF22 (scnA).